Reading from the N-terminus, the 354-residue chain is D-alanine--D-alanine ligase (354 aa).

One can recognise an ATP-grasp domain in the interval 140 to 344; the sequence is KRLLRDSGLS…ISTLLTRLIM (205 aa). 170–225 provides a ligand contact to ATP; that stretch reads ADMFGLPFFVKPVNQGSSIGVAKVNDDYSFHSALDIAFFYSHKIIIESCIAGRELE. Residues D298, E311, and N313 each contribute to the Mg(2+) site.

It belongs to the D-alanine--D-alanine ligase family. Mg(2+) is required as a cofactor. Requires Mn(2+) as cofactor.

The protein localises to the cytoplasm. The enzyme catalyses 2 D-alanine + ATP = D-alanyl-D-alanine + ADP + phosphate + H(+). The protein operates within cell wall biogenesis; peptidoglycan biosynthesis. Cell wall formation. The chain is D-alanine--D-alanine ligase from Blochmanniella floridana.